The sequence spans 22 residues: Mu-conotoxin KIIIB (22 aa).

Residues 1–2 constitute a propeptide that is removed on maturation; that stretch reads KR. Disulfide bonds link Cys-5–Cys-13, Cys-5–Cys-19, Cys-5–Cys-20, Cys-6–Cys-13, Cys-6–Cys-19, Cys-8–Cys-19, and Cys-8–Cys-20. Pharmacophore key residues regions lie at residues 14 to 16 and 18 to 19; these read RDH and RC. Cys-20 is modified (cysteine amide).

This sequence belongs to the conotoxin M superfamily. Monomer. Toxins with three different disulfide connectivities have been synthesized. The conotoxin mu-KIIIA-P1 shows the connectivity C1-C5, C2-C4, and C3-C6, whereas mu-KIIIA-P2 shows the connectivity C1-C6, C2-C4, and C3-C5. The conotoxin mu-KIIIA-N has the 'native' fold of the mu-conotoxin family (C1-C4, C2-C5, and C3-C6). Mu-KIIIA-P1 and mu-KIIIA-P2 are obtained by both thermodynamic oxidative folding and regioselective synthesis. Mu-KIIIA-P1 is the major oxidative folding product. Mu-KIIIA-N is only obtained by regioselective synthesis. Expressed by the venom duct.

Its subcellular location is the secreted. Mu-conotoxin KIIIA-P1: mu-conotoxins block voltage-gated sodium channels (Nav). This toxin potently blocks Nav1.2/SCN2A (IC(50)5-124 nM), Nav1.4/SCN4A (IC(50)=20-90 nM), and Nav1.7/SCN9A (IC(50)=290-413 nM). It moderately blocks Nav1.1/SCN1A, and mNav1.6/SCN8A. It also shows a very low activity on Nav1.3/SCN3A. This toxin binds a microsite within the pore different from the tetrodotoxin binding site 1 (tested on Nav1.2). The block is partial, with a residual current that can be completely blocked by TTX. The toxin probably docks at a more superficial site in the outer vestibule of the channel than does TTX. On rNav1.2/SCN2A, it produces a block that is only partially reversible. The block of Nav1.7 is modified when beta-subunits are coexpressed with the alpha subunit. Hence, blocks of channels containing beta-1 and beta-3 subunits are more potent (compared to channels without beta subunits), whereas blocks of channels containing beta-2 and beta-4 subunits are less potent (compared to channels without beta subunits). Functionally, mu-conotoxin KIIIA-P2: This toxin potently blocks Nav1.2/SCN2A (Kd=230 nM, IC(50)=1.37 uM) and Nav1.4/SCN4A (Kd=830 nM, IC(50)=2 uM). It also moderately blocks Nav1.7/SCN9A (Kd=1.57 uM, IC(50)=5.4 uM). In addition, this toxin may also inhibit other sodium channels, as does Mu-conotoxin KIIIA-P1. In terms of biological role, mu-conotoxin KIIIA-N: This toxin moderately blocks Nav1.2/SCN2A (IC(50)=875 nM), Nav1.4/SCN4A (IC(50)=472 nM), and Nav1.7/SCN9A (IC(50)=887 nM). Its function is as follows. Mu-conotoxin KIIIB-P1: This toxin potently blocks Nav1.2/SCN2A (Kd=470 nM). In addition, this toxin may also inhibit other sodium channels, as does Mu-conotoxin KIIIA-P1. Mu-conotoxin KIIIB-P2: This toxin potently blocks Nav1.2/SCN2A (Kd=26 nM). In addition, this toxin may also inhibit other sodium channels, as does Mu-conotoxin KIIIA-P1. The sequence is that of Mu-conotoxin KIIIB from Conus kinoshitai (Kinoshita's cone).